Here is a 426-residue protein sequence, read N- to C-terminus: Serine--tRNA ligase (426 aa).

233–235 (TAE) lines the L-serine pocket. 264-266 (RSE) is a binding site for ATP. Position 287 (E287) interacts with L-serine. Position 351–354 (351–354 (EISS)) interacts with ATP. S387 serves as a coordination point for L-serine.

The protein belongs to the class-II aminoacyl-tRNA synthetase family. Type-1 seryl-tRNA synthetase subfamily. In terms of assembly, homodimer. The tRNA molecule binds across the dimer.

It localises to the cytoplasm. The catalysed reaction is tRNA(Ser) + L-serine + ATP = L-seryl-tRNA(Ser) + AMP + diphosphate + H(+). It carries out the reaction tRNA(Sec) + L-serine + ATP = L-seryl-tRNA(Sec) + AMP + diphosphate + H(+). The protein operates within aminoacyl-tRNA biosynthesis; selenocysteinyl-tRNA(Sec) biosynthesis; L-seryl-tRNA(Sec) from L-serine and tRNA(Sec): step 1/1. Catalyzes the attachment of serine to tRNA(Ser). Is also able to aminoacylate tRNA(Sec) with serine, to form the misacylated tRNA L-seryl-tRNA(Sec), which will be further converted into selenocysteinyl-tRNA(Sec). The protein is Serine--tRNA ligase of Clostridium botulinum (strain Okra / Type B1).